The sequence spans 299 residues: Very long chain fatty acid elongase 5 (299 aa).

Methionine 1 is modified (N-acetylmethionine). Helical transmembrane passes span 26 to 46, 64 to 84, 112 to 132, 139 to 158, 168 to 187, 205 to 225, and 226 to 246; these read WFLLDNYVPTLVCSILYLLIV, ILVVYNLGLTLLSLYMFCELV, VLWWYYFSKLIEFMDTFFFIL, ITVLHVYHHASMLNIWWFVM, FGATLNSFIHVLMYSYYGLS, GQLLQFVLTIIQTSCGVIWPC, and TFPLGWLYFQIGYMISLITLF. The residue at position 285 (serine 285) is a Phosphoserine.

This sequence belongs to the ELO family. ELOVL5 subfamily. In terms of assembly, interacts with TECR.

It is found in the endoplasmic reticulum membrane. The protein resides in the cell projection. It localises to the dendrite. It catalyses the reaction a very-long-chain acyl-CoA + malonyl-CoA + H(+) = a very-long-chain 3-oxoacyl-CoA + CO2 + CoA. The enzyme catalyses (6Z,9Z,12Z)-octadecatrienoyl-CoA + malonyl-CoA + H(+) = (8Z,11Z,14Z)-3-oxoeicosatrienoyl-CoA + CO2 + CoA. It carries out the reaction (9Z,12Z,15Z)-octadecatrienoyl-CoA + malonyl-CoA + H(+) = (11Z,14Z,17Z)-3-oxoeicosatrienoyl-CoA + CO2 + CoA. The catalysed reaction is (9Z)-hexadecenoyl-CoA + malonyl-CoA + H(+) = 3-oxo-(11Z)-octadecenoyl-CoA + CO2 + CoA. It catalyses the reaction (9Z)-octadecenoyl-CoA + malonyl-CoA + H(+) = 3-oxo-(11Z)-eicosenoyl-CoA + CO2 + CoA. The enzyme catalyses (11Z)-octadecenoyl-CoA + malonyl-CoA + H(+) = 3-oxo-(13Z)-eicosenoyl-CoA + CO2 + CoA. It carries out the reaction (9Z,12Z)-octadecadienoyl-CoA + malonyl-CoA + H(+) = (11Z,14Z)-3-oxoicosa-11,14-dienoyl-CoA + CO2 + CoA. The catalysed reaction is (6Z,9Z,12Z,15Z)-octadecatetraenoyl-CoA + malonyl-CoA + H(+) = (8Z,11Z,14Z,17Z)-3-oxoicosatetraenoyl-CoA + CO2 + CoA. It catalyses the reaction (5Z,8Z,11Z,14Z)-eicosatetraenoyl-CoA + malonyl-CoA + H(+) = (7Z,10Z,13Z,16Z)-3-oxodocosatetraenoyl-CoA + CO2 + CoA. The enzyme catalyses (5Z,8Z,11Z,14Z,17Z)-eicosapentaenoyl-CoA + malonyl-CoA + H(+) = 3-oxo-(7Z,10Z,13Z,16Z,19Z)-docosapentaenoyl-CoA + CO2 + CoA. The protein operates within lipid metabolism; polyunsaturated fatty acid biosynthesis. Catalyzes the first and rate-limiting reaction of the four reactions that constitute the long-chain fatty acids elongation cycle. This endoplasmic reticulum-bound enzymatic process allows the addition of 2 carbons to the chain of long- and very long-chain fatty acids (VLCFAs) per cycle. Condensing enzyme that acts specifically toward polyunsaturated acyl-CoA with the higher activity toward C18:3(n-6) acyl-CoA. May participate in the production of monounsaturated and of polyunsaturated VLCFAs of different chain lengths that are involved in multiple biological processes as precursors of membrane lipids and lipid mediators. In conditions where the essential linoleic and alpha linoleic fatty acids are lacking it is also involved in the synthesis of Mead acid from oleic acid. In Bos taurus (Bovine), this protein is Very long chain fatty acid elongase 5.